The primary structure comprises 339 residues: Transcription factor IIIA (339 aa).

9 C2H2-type zinc fingers span residues 13–37 (YICS…LCKH), 43–67 (FPCK…SITH), 73–98 (FKCD…NRFH), 105–129 (YVCH…QFTH), 135–159 (YKCP…EKVH), 162–188 (YPCK…KECH), 192–214 (VMCD…KKTH), 221–246 (YCCP…QSFH), and 252–276 (FACE…SVVH). Composition is skewed to basic and acidic residues over residues 275-288 (VHDP…EKCP) and 305-316 (KSKEKSAAKATE). Residues 275-339 (VHDPEKRKLK…ETKGSLVIEK (65 aa)) form a disordered region.

Synthesized in oocytes and, in much lower levels, in somatic cells.

It is found in the nucleus. Involved in ribosomal large subunit biogenesis. Interacts with the internal control region (ICR) of approximately 50 bases within the 5S RNA genes, is required for correct transcription of these genes by RNA polymerase III. Also binds the transcribed 5S RNA's. The protein is Transcription factor IIIA (gtf3a) of Xenopus borealis (Kenyan clawed frog).